The primary structure comprises 252 residues: Probable transcriptional regulatory protein Cagg_2594 (252 aa).

Residues 1 to 14 (MSGHSKWHTIRRAK) are compositionally biased toward basic residues. Positions 1–22 (MSGHSKWHTIRRAKSANDQRRG) are disordered.

It belongs to the TACO1 family.

It is found in the cytoplasm. The sequence is that of Probable transcriptional regulatory protein Cagg_2594 from Chloroflexus aggregans (strain MD-66 / DSM 9485).